Consider the following 254-residue polypeptide: Phosphoribosylaminoimidazole-succinocarboxamide synthase (254 aa).

The protein belongs to the SAICAR synthetase family.

The catalysed reaction is 5-amino-1-(5-phospho-D-ribosyl)imidazole-4-carboxylate + L-aspartate + ATP = (2S)-2-[5-amino-1-(5-phospho-beta-D-ribosyl)imidazole-4-carboxamido]succinate + ADP + phosphate + 2 H(+). The protein operates within purine metabolism; IMP biosynthesis via de novo pathway; 5-amino-1-(5-phospho-D-ribosyl)imidazole-4-carboxamide from 5-amino-1-(5-phospho-D-ribosyl)imidazole-4-carboxylate: step 1/2. The polypeptide is Phosphoribosylaminoimidazole-succinocarboxamide synthase (Brucella abortus (strain S19)).